Consider the following 317-residue polypeptide: Putative AP2/ERF and B3 domain-containing protein Os01g0140700 (317 aa).

The disordered stretch occupies residues 1–37 (MEQEAAMVVFSCNSGSGGSSSTTDSKQEEEEEEELAA). Positions 27-37 (QEEEEEEELAA) are enriched in acidic residues. The AP2/ERF DNA-binding region spans 66-121 (RYKGVVPQPNGRWGAQIYERHARVWLGTFPDEEAAARAYDVAALRFRGRDAVTNRA). A DNA-binding region (TF-B3) is located at residues 178-287 (FEKAVTPSDV…EKHLLIDCKK (110 aa)).

It localises to the nucleus. This is Putative AP2/ERF and B3 domain-containing protein Os01g0140700 from Oryza sativa subsp. japonica (Rice).